We begin with the raw amino-acid sequence, 347 residues long: MRIEEDLKLGFKDVLIRPKRSTLKSRSDVELERQFTFKHSGQSWSGVPIIAANMDTVGTFSMASALASFDILTAVHKHYSVEEWQAFINNSSADVLKHVMVSTGTSDADFEKTKQILDLNSALNFVCIDVANGYSEHFVQFVAKAREAWPTKTICAGNVVTGEMCEELILSGADIVKVGIGPGSVCTTRVKTGVGYPQLSAVIECADAAHGLGGMIVSDGGCTTPGDVAKAFGGGADFVMLGGMLAGHEESGGRIVEENGEKFMLFYGMSSESAMKRHVGGVAEYRAAEGKTVKLPLRGPVENTARDILGGLRSACTYVGASRLKELTKRTTFIRVQEQENRIFNNL.

108–131 (ADFEKTKQILDLNSALNFVCIDVA) contacts NADP(+). K(+) is bound by residues glycine 181 and glycine 183. Catalysis depends on cysteine 186, which acts as the Thioimidate intermediate. NADP(+) is bound at residue 216-239 (IVSDGGCTTPGDVAKAFGGGADFV).

The protein belongs to the IMPDH/GMPR family. GuaC type 1 subfamily. As to quaternary structure, homotetramer.

The catalysed reaction is IMP + NH4(+) + NADP(+) = GMP + NADPH + 2 H(+). Catalyzes the irreversible NADPH-dependent deamination of GMP to IMP. It functions in the conversion of nucleobase, nucleoside and nucleotide derivatives of G to A nucleotides, and in maintaining the intracellular balance of A and G nucleotides. The polypeptide is GMP reductase (Escherichia coli O81 (strain ED1a)).